Reading from the N-terminus, the 1240-residue chain is Pectate lyase L (1240 aa).

The N-terminal stretch at 1-26 is a signal peptide; that stretch reads MRNCKGLSILLCFLLVFFAMPFPAVA. Has catalytic activity regions lie at residues 27–551 and 545–1240; these read EEAE…VTVR and TLKV…KSIK. Ca(2+)-binding residues include Asp325, Glu349, Asp350, Asp1049, Asp1073, Asp1074, and Asp1077. Residue Lys1117 is the Proton acceptor of the active site.

Belongs to the polysaccharide lyase 9 family. It depends on Ca(2+) as a cofactor.

The protein localises to the secreted. The enzyme catalyses Eliminative cleavage of (1-&gt;4)-alpha-D-galacturonan to give oligosaccharides with 4-deoxy-alpha-D-galact-4-enuronosyl groups at their non-reducing ends.. Its activity is regulated as follows. Inhibited by the metal chelator ethylenediaminetetraacetic acid (EDTA). Its function is as follows. Cleaves polygalacturonate or partially methylated pectin. When assayed on polygalacturonate or on pectin, it releases monogalacturonate as the principal product. In Thermoclostridium stercorarium (Clostridium stercorarium), this protein is Pectate lyase L.